A 415-amino-acid chain; its full sequence is Palmitoyl-acyl carrier protein thioesterase, chloroplastic (415 aa).

2 stretches are compositionally biased toward low complexity: residues 1 to 16 (MVAT…LPSA) and 24 to 41 (KLGN…KSTP). The transit peptide at 1–60 (MVATAASSAFFPLPSADTSSRPGKLGNKPSSLSPLKPKSTPNGGLQVKANASAPPKINGS) directs the protein to the chloroplast. The disordered stretch occupies residues 1-81 (MVATAASSAF…QEDAHSAPPP (81 aa)). Catalysis depends on residues N314, H316, and C351.

It belongs to the acyl-ACP thioesterase family.

The protein resides in the plastid. It is found in the chloroplast. The catalysed reaction is hexadecanoyl-[ACP] + H2O = hexadecanoate + holo-[ACP] + H(+). Its function is as follows. Plays an essential role in chain termination during de novo fatty acid synthesis. High thioesterase activity for palmitoyl-ACP versus other acyl-ACPs. The protein is Palmitoyl-acyl carrier protein thioesterase, chloroplastic (FATB1) of Cuphea hookeriana (Cigar plant).